A 286-amino-acid chain; its full sequence is Pyridoxal kinase PdxY (286 aa).

Ser8 lines the substrate pocket. ATP is bound by residues Asp110 and Glu147. Substrate is bound at residue Asp223.

The protein belongs to the pyridoxine kinase family. PdxY subfamily. Homodimer. Mg(2+) is required as a cofactor.

The enzyme catalyses pyridoxal + ATP = pyridoxal 5'-phosphate + ADP + H(+). Its pathway is cofactor metabolism; pyridoxal 5'-phosphate salvage; pyridoxal 5'-phosphate from pyridoxal: step 1/1. In terms of biological role, pyridoxal kinase involved in the salvage pathway of pyridoxal 5'-phosphate (PLP). Catalyzes the phosphorylation of pyridoxal to PLP. In Granulibacter bethesdensis (strain ATCC BAA-1260 / CGDNIH1), this protein is Pyridoxal kinase PdxY.